The primary structure comprises 798 residues: uncharacterized protein (798 aa).

The tract at residues Lys-432–Val-573 is disordered. Composition is skewed to low complexity over residues Ser-438 to Thr-449, Arg-456 to Asn-465, Ser-473 to Pro-487, and Ser-495 to Tyr-510. Over residues Pro-519–Ile-529 the composition is skewed to polar residues. A compositionally biased stretch (low complexity) spans Glu-535 to Val-547. Positions Asp-548–Pro-562 are enriched in basic and acidic residues. A compositionally biased stretch (basic residues) spans Arg-563–Arg-572.

The protein localises to the virion. This is an uncharacterized protein from Acanthamoeba polyphaga (Amoeba).